The chain runs to 826 residues: MAEPSAPESKHKSSLNSSPWSGLMALGNSRHGHHGPGAQCAHKAAGGVAPPKPAPAGLSGGLSQPAGWQSLLSFTILFLAWLAGFSSRLFAVIRFESIIHEFDPWFNYRSTHHLASHGFYEFLNWFDERAWYPLGRIVGGTVYPGLMITAGLIHWILNTLNITVHIRDVCVFLAPTFSGLTSISTFLLTRELWNQGAGLLAACFIAIVPGYISRSVAGSFDNEGIAIFALQFTYYLWVKSVKTGSVFWTMCCCLSYFYMVSAWGGYVFIINLIPLHVFVLLLMQRYSKRVYIAYSTFYIVGLILSMQIPFVGFQPIRTSEHMAAAGVFALLQAYAFLQYLRDRLTKQEFQTLFFLGVSLAAGAVFLSVIYLTYTGYIAPWSGRFYSLWDTGYAKIHIPIIASVSEHQPTTWVSFFFDLHILVCTFPAGLWFCIKNINDERVFVALYAISAVYFAGVMVRLMLTLTPVVCMLSAIAFSNVFEHYLGDDMKRENPPVEDSSDEDDKRNPGNLYDKAGKVRKHVTEQEKTEEGLGPNIKSIVTMLMLMLLMMFAVHCTWVTSNAYSSPSVVLASYNHDGTRNILDDFREAYFWLRQNTDEHARVMSWWDYGYQIAGMANRTTLVDNNTWNNSHIALVGKAMSSNESAAYKIMRSLDVDYVLVIFGGVIGYSGDDINKFLWMVRIAEGEHPKDIRESDYFTPQGEFRVDKAGSPTLLNCLMYKMSYYRFGEMQLDFRTPPGFDRTRNAEIGNKDIKFKHLEEAFTSEHWLVRIYKVKAPDNRETLDHKPRVTNIFPKQKYLSKKTTKRKRGYIKNKLVFKKGKKISKKTV.

The tract at residues 1–60 (MAEPSAPESKHKSSLNSSPWSGLMALGNSRHGHHGPGAQCAHKAAGGVAPPKPAPAGLSG) is disordered. An N-acetylalanine modification is found at alanine 2. The Cytoplasmic portion of the chain corresponds to 2-41 (AEPSAPESKHKSSLNSSPWSGLMALGNSRHGHHGPGAQCA). Serine 13, serine 18, and serine 29 each carry phosphoserine. The chain crosses the membrane as a helical span at residues 42–86 (HKAAGGVAPPKPAPAGLSGGLSQPAGWQSLLSFTILFLAWLAGFS). Residues 87-173 (SRLFAVIRFE…VHIRDVCVFL (87 aa)) are Lumenal-facing. The short motif at 101–103 (EFD) is the DXD motif 1 element. A Mn(2+)-binding site is contributed by aspartate 103. The chain crosses the membrane as a helical span at residues 174 to 192 (APTFSGLTSISTFLLTREL). Over 193-194 (WN) the chain is Cytoplasmic. The chain crosses the membrane as a helical span at residues 195–212 (QGAGLLAACFIAIVPGYI). At 213-223 (SRSVAGSFDNE) the chain is on the lumenal side. Residues aspartate 221 and glutamate 223 each coordinate Mn(2+). Residues 221–223 (DNE) carry the DXD motif 2 motif. The helical transmembrane segment at 224-243 (GIAIFALQFTYYLWVKSVKT) threads the bilayer. The Cytoplasmic segment spans residues 244–245 (GS). Residues 246-260 (VFWTMCCCLSYFYMV) traverse the membrane as a helical segment. At 261 to 265 (SAWGG) the chain is on the lumenal side. The helical transmembrane segment at 266-282 (YVFIINLIPLHVFVLLL) threads the bilayer. At 283-287 (MQRYS) the chain is on the cytoplasmic side. Residues 288-313 (KRVYIAYSTFYIVGLILSMQIPFVGF) traverse the membrane as a helical segment. At 314 to 321 (QPIRTSEH) the chain is on the lumenal side. Residues 322 to 341 (MAAAGVFALLQAYAFLQYLR) form a helical membrane-spanning segment. The Cytoplasmic portion of the chain corresponds to 342–350 (DRLTKQEFQ). A helical membrane pass occupies residues 351–371 (TLFFLGVSLAAGAVFLSVIYL). Residues 372-410 (TYTGYIAPWSGRFYSLWDTGYAKIHIPIIASVSEHQPTT) lie on the Lumenal side of the membrane. Positions 402–405 (SVSE) match the SVSE motif motif. A helical transmembrane segment spans residues 411 to 433 (WVSFFFDLHILVCTFPAGLWFCI). The Cytoplasmic portion of the chain corresponds to 434 to 439 (KNINDE). A helical membrane pass occupies residues 440 to 456 (RVFVALYAISAVYFAGV). The Lumenal segment spans residues 457-460 (MVRL). Arginine 459 contributes to the dolichyl diphosphooligosaccharide binding site. The chain crosses the membrane as a helical span at residues 461 to 482 (MLTLTPVVCMLSAIAFSNVFEH). The Cytoplasmic segment spans residues 483–526 (YLGDDMKRENPPVEDSSDEDDKRNPGNLYDKAGKVRKHVTEQEK). Residues 490–512 (RENPPVEDSSDEDDKRNPGNLYD) form a disordered region. Phosphoserine occurs at positions 498 and 499. A helical membrane pass occupies residues 527–552 (TEEGLGPNIKSIVTMLMLMLLMMFAV). Over 553-826 (HCTWVTSNAY…KGKKISKKTV (274 aa)) the chain is Lumenal. The tract at residues 604 to 606 (WWD) is interacts with target acceptor peptide in protein substrate. The WWDYG motif signature appears at 604-608 (WWDYG). Tyrosine 609 serves as a coordination point for dolichyl diphosphooligosaccharide. 2 N-linked (GlcNAc...) asparagine glycosylation sites follow: asparagine 616 and asparagine 623. N-linked (GlcNAc...) (high mannose) asparagine glycosylation is present at asparagine 627. The N-linked (GlcNAc...) asparagine glycan is linked to asparagine 641. The short motif at 671–678 (DINKFLWM) is the DK motif element.

It belongs to the STT3 family. As to quaternary structure, component of the oligosaccharyltransferase (OST) complex. There are 2 OST complexes, OST-A and OST-B, which contain STT3A or STT3B as catalytic subunit, respectively. OST-A and OST-B contain common core subunits RPN1, RPN2, OST48, OST4, DAD1 and TMEM258, and OST-B contains either MAGT1 or TUSC3 as specific accessory subunit. Requires Mg(2+) as cofactor. Mn(2+) is required as a cofactor.

Its subcellular location is the endoplasmic reticulum. It is found in the endoplasmic reticulum membrane. It carries out the reaction a di-trans,poly-cis-dolichyl diphosphooligosaccharide + L-asparaginyl-[protein] = N(4)-(oligosaccharide-(1-&gt;4)-N-acetyl-beta-D-glucosaminyl-(1-&gt;4)-N-acetyl-beta-D-glucosaminyl)-L-asparaginyl-[protein] + a di-trans,poly-cis-dolichyl diphosphate + H(+). The protein operates within protein modification; protein glycosylation. In terms of biological role, catalytic subunit of the oligosaccharyl transferase (OST) complex that catalyzes the initial transfer of a defined glycan (Glc(3)Man(9)GlcNAc(2) in eukaryotes) from the lipid carrier dolichol-pyrophosphate to an asparagine residue within an Asn-X-Ser/Thr consensus motif in nascent polypeptide chains, the first step in protein N-glycosylation. N-glycosylation occurs cotranslationally and the complex associates with the Sec61 complex at the channel-forming translocon complex that mediates protein translocation across the endoplasmic reticulum (ER). All subunits are required for a maximal enzyme activity. This subunit contains the active site and the acceptor peptide and donor lipid-linked oligosaccharide (LLO) binding pockets. STT3B is present in a small subset of OST complexes and mediates both cotranslational and post-translational N-glycosylation of target proteins: STT3B-containing complexes are required for efficient post-translational glycosylation and while they are less competent than STT3A-containing complexes for cotranslational glycosylation, they have the ability to mediate glycosylation of some nascent sites that are not accessible for STT3A. STT3B-containing complexes also act post-translationally and mediate modification of skipped glycosylation sites in unfolded proteins. Plays a role in ER-associated degradation (ERAD) pathway that mediates ubiquitin-dependent degradation of misfolded endoplasmic reticulum proteins by mediating N-glycosylation of unfolded proteins, which are then recognized by the ERAD pathway and targeted for degradation. This Canis lupus familiaris (Dog) protein is Dolichyl-diphosphooligosaccharide--protein glycosyltransferase subunit STT3B.